A 315-amino-acid chain; its full sequence is Olfactory receptor 5AN6 (315 aa).

The Extracellular portion of the chain corresponds to 1–29 (MPGGRNSTVITKFILVGFSDFPKLKLVLF). The helical transmembrane segment at 30 to 50 (VIFLGSYLSTVVWNLGLIILI) threads the bilayer. Over 51-54 (RIDP) the chain is Cytoplasmic. A helical transmembrane segment spans residues 55 to 75 (YLHTPMYFFLSNLSFLDFCYI). Over 76-99 (SSTTPKMLSGFFQKSKSISFVGCT) the chain is Extracellular. A disulfide bridge connects residues C98 and C180. Residues 100–120 (MQYFIFSSLGLSECCLLAAMA) traverse the membrane as a helical segment. Over 121-123 (YDR) the chain is Cytoplasmic. The chain crosses the membrane as a helical span at residues 124-143 (YAAICNPLLYTAIMSPSLCV). Position 144 (H144) is a topological domain, extracellular. A helical membrane pass occupies residues 145-165 (MVVGAYSTGLLGSLIQLCAIL). Residues 166-202 (QLHFCGPNIINHFFCDLPQLLVLSCSETFPLQVLKFV) lie on the Cytoplasmic side of the membrane. The helical transmembrane segment at 203 to 223 (IAVIFGVASVIVILISYGYII) threads the bilayer. Residues 224-240 (GTILNISSVEGRSKAFN) lie on the Extracellular side of the membrane. A helical transmembrane segment spans residues 241–261 (TCASHLTAVTLFFGSGLFVYM). The Cytoplasmic portion of the chain corresponds to 262-272 (RPSSNSSQGYD). The chain crosses the membrane as a helical span at residues 273-293 (KMASVFYTVVIPMLNPLIYSL). The Extracellular segment spans residues 294 to 315 (RNKEIKDALQRCKNKCFSQCHC).

The protein belongs to the G-protein coupled receptor 1 family. As to expression, localized in the dorsomedial and ventral region of the olfactory bulb.

The protein localises to the cell membrane. Its function is as follows. Odorant receptor specific for muscone. Muscone-binding causes a conformation change that triggers signaling via G(s)-class of G alpha protein GNAL, activating adenylyl cyclase. The polypeptide is Olfactory receptor 5AN6 (Mus musculus (Mouse)).